The primary structure comprises 92 residues: Beta-2-microglobulin (92 aa).

The Ig-like C1-type domain occupies proline 2–threonine 89. The cysteines at positions 22 and 77 are disulfide-linked.

This sequence belongs to the beta-2-microglobulin family. As to quaternary structure, heterodimer of an alpha chain and a beta chain. Beta-2-microglobulin is the beta-chain of major histocompatibility complex class I molecules.

The protein resides in the secreted. Functionally, component of the class I major histocompatibility complex (MHC). Involved in the presentation of peptide antigens to the immune system. This Mus spretus (Western Mediterranean mouse) protein is Beta-2-microglobulin (B2m).